A 499-amino-acid chain; its full sequence is Bestrophin homolog 22 (499 aa).

Transmembrane regions (helical) follow at residues 29-49, 77-97, 235-255, and 267-287; these read WKAV…ISCI, IPLT…WGSI, LVYP…CLIG, and GIDL…MGWM. A compositionally biased stretch (basic and acidic residues) spans 417–432; it reads HNAKHAKQRGLERANS. Disordered stretches follow at residues 417-455 and 474-499; these read HNAK…ANGS and TSNP…TSRH.

It belongs to the anion channel-forming bestrophin (TC 1.A.46) family. Calcium-sensitive chloride channel subfamily. Forms oligomers.

The protein resides in the cell membrane. Its function is as follows. Forms chloride channels. The sequence is that of Bestrophin homolog 22 (best-22) from Caenorhabditis elegans.